Here is a 123-residue protein sequence, read N- to C-terminus: Large ribosomal subunit protein uL29 (123 aa).

The residue at position 19 (Lys-19) is an N6-acetyllysine. A Glycyl lysine isopeptide (Lys-Gly) (interchain with G-Cter in SUMO2) cross-link involves residue Lys-25. At Ser-29 the chain carries Phosphoserine. Lys-43 carries the N6-acetyllysine modification.

Belongs to the universal ribosomal protein uL29 family. In terms of assembly, component of the large ribosomal subunit.

The protein resides in the cytoplasm. In terms of biological role, component of the large ribosomal subunit. The ribosome is a large ribonucleoprotein complex responsible for the synthesis of proteins in the cell. The sequence is that of Large ribosomal subunit protein uL29 (RPL35) from Sus scrofa (Pig).